We begin with the raw amino-acid sequence, 426 residues long: Putative zinc protease AlbF (426 aa).

Zn(2+) is bound at residue His66. Glu69 acts as the Proton acceptor in catalysis. The Zn(2+) site is built by His70 and Glu142.

It belongs to the peptidase M16 family. Requires Zn(2+) as cofactor.

In terms of biological role, required for production of the bacteriocin subtilosin. Could catalyze some step in the processing of presubtilosin. This chain is Putative zinc protease AlbF (albF), found in Bacillus subtilis (strain 168).